Reading from the N-terminus, the 63-residue chain is Cytochrome c oxidase subunit 5C (63 aa).

A helical membrane pass occupies residues 16–34 (VVKEIFIGLTLGLVAGGMW).

The protein belongs to the cytochrome c oxidase subunit 5C family.

The protein resides in the mitochondrion inner membrane. This protein is one of the nuclear-coded polypeptide chains of cytochrome c oxidase, the terminal oxidase in mitochondrial electron transport. The chain is Cytochrome c oxidase subunit 5C (COX5C) from Hordeum vulgare (Barley).